Here is a 352-residue protein sequence, read N- to C-terminus: MRPLNVQIRLGNLRHNYQILKEMHGGKLLAVVKADAYGHGAVRCAFALADLADGFAVATIDEGIRLRESGITHPIVLLEGVFEASEYEAVEQYSLWPAVGNQWQLEALLIRHWKKPVKVWLKMDSGMHRTGFFPHDYASAYAALKQSEYVDSIVKFSHFSCADEPESGMTEIQMEAFDLGTEGLEGEESLANSAAILNVPEARRDWGRAGLALYGISPFGGSDDRLKPVMRLSTRIFGERVLQPHSPIGYGATFYTSKSTRVGLIACGYADGYPRRAPSNSPVAVDGKLTRVIGRVSMDMMTIELDASQEGLGHEVELWGDTVNINTVAEAAGTIPYELMCNIKRAKFTYIE.

K33 acts as the Proton acceptor; specific for D-alanine in catalysis. K33 is modified (N6-(pyridoxal phosphate)lysine). R129 contributes to the substrate binding site. Catalysis depends on Y250, which acts as the Proton acceptor; specific for L-alanine. M298 contributes to the substrate binding site.

This sequence belongs to the alanine racemase family. The cofactor is pyridoxal 5'-phosphate.

It carries out the reaction L-alanine = D-alanine. It participates in amino-acid biosynthesis; D-alanine biosynthesis; D-alanine from L-alanine: step 1/1. In terms of biological role, catalyzes the interconversion of L-alanine and D-alanine. May also act on other amino acids. The chain is Alanine racemase (alr) from Neisseria meningitidis serogroup C / serotype 2a (strain ATCC 700532 / DSM 15464 / FAM18).